The chain runs to 418 residues: MNKLAIIGAQWGDEGKGKVVNYFSQFNDIIVRSSGGANAGHTIYFKDKKYVHHLLPSITFDTDSKGFLAKGMVIELEQMIEELKVLEADFPGISKRFMVDVETFIVLPYHKEEDGLLESMRKNPIGTTKRGIGPAYQDKAARQNVRIIDLFDDELLRERVEEIVYLKNNIYEGKMHIDVDETVNYLLDKFDQLLKLGVTFTSASEIEDEIKNKRVLFEGAQGIMLDLDSGTYPYVTSSTTTAYSASCADVTLTDDDTIMGVVKAYTSRVGEGEFPTELFDEEADKLRKLGNEFGATTGRNRRVGWIDLAQLRYAIKKSKINSIVMTKADVLNGYDKVKVCVGYEIDGVEQKMPFISNDFKKAKPIYKEFDGWNDVFEVNFLKYMTFIEKELDTEISYVSYGPKTEEIMEKRDFIMNIK.

GTP-binding positions include 12-18 (GDEGKGK) and 40-42 (GHT). D13 acts as the Proton acceptor in catalysis. Residues D13 and G40 each contribute to the Mg(2+) site. Residues 13 to 16 (DEGK), 38 to 41 (NAGH), T128, R142, Q221, T236, and R299 each bind IMP. H41 serves as the catalytic Proton donor. Substrate is bound at residue 295 to 301 (ATTGRNR). Residues R301, 327-329 (KAD), and 399-401 (SYG) contribute to the GTP site.

This sequence belongs to the adenylosuccinate synthetase family. In terms of assembly, homodimer. It depends on Mg(2+) as a cofactor.

It is found in the cytoplasm. The enzyme catalyses IMP + L-aspartate + GTP = N(6)-(1,2-dicarboxyethyl)-AMP + GDP + phosphate + 2 H(+). It functions in the pathway purine metabolism; AMP biosynthesis via de novo pathway; AMP from IMP: step 1/2. Plays an important role in the de novo pathway of purine nucleotide biosynthesis. Catalyzes the first committed step in the biosynthesis of AMP from IMP. In Finegoldia magna (strain ATCC 29328 / DSM 20472 / WAL 2508) (Peptostreptococcus magnus), this protein is Adenylosuccinate synthetase.